The sequence spans 308 residues: Porphobilinogen deaminase (308 aa).

Cysteine 241 carries the S-(dipyrrolylmethanemethyl)cysteine modification.

This sequence belongs to the HMBS family. Monomer. The cofactor is dipyrromethane.

The enzyme catalyses 4 porphobilinogen + H2O = hydroxymethylbilane + 4 NH4(+). It functions in the pathway porphyrin-containing compound metabolism; protoporphyrin-IX biosynthesis; coproporphyrinogen-III from 5-aminolevulinate: step 2/4. In terms of biological role, tetrapolymerization of the monopyrrole PBG into the hydroxymethylbilane pre-uroporphyrinogen in several discrete steps. The sequence is that of Porphobilinogen deaminase from Staphylococcus carnosus (strain TM300).